We begin with the raw amino-acid sequence, 428 residues long: Adenylosuccinate synthetase (428 aa).

Residues 12-18 (GDEGKGK) and 40-42 (GHT) each bind GTP. The active-site Proton acceptor is D13. Mg(2+) contacts are provided by D13 and G40. IMP-binding positions include 13-16 (DEGK), 38-41 (NAGH), T128, R142, Q223, T238, and R302. H41 serves as the catalytic Proton donor. 298–304 (VTTGRPR) is a binding site for substrate. GTP is bound by residues R304, 330-332 (KLD), and 412-414 (GTG).

It belongs to the adenylosuccinate synthetase family. Homodimer. The cofactor is Mg(2+).

The protein localises to the cytoplasm. It catalyses the reaction IMP + L-aspartate + GTP = N(6)-(1,2-dicarboxyethyl)-AMP + GDP + phosphate + 2 H(+). It participates in purine metabolism; AMP biosynthesis via de novo pathway; AMP from IMP: step 1/2. Plays an important role in the de novo pathway of purine nucleotide biosynthesis. Catalyzes the first committed step in the biosynthesis of AMP from IMP. The polypeptide is Adenylosuccinate synthetase (Bifidobacterium animalis subsp. lactis (strain AD011)).